Here is a 334-residue protein sequence, read N- to C-terminus: Heme A synthase (334 aa).

A run of 5 helical transmembrane segments spans residues 6–26 (ITRW…IGGI), 93–113 (GRIT…QGVI), 119–139 (LPYI…WYMV), 154–174 (LAFH…QLIK), and 189–209 (LIFS…GALV). Residue His-253 participates in heme binding. 3 helical membrane passes run 255–275 (LGGF…FKVK), 282–302 (IAYF…ITIV), and 305–325 (VPII…SIII). Residue His-313 coordinates heme.

Belongs to the COX15/CtaA family. Type 2 subfamily. In terms of assembly, interacts with CtaB. The cofactor is heme b.

Its subcellular location is the cell membrane. It catalyses the reaction Fe(II)-heme o + 2 A + H2O = Fe(II)-heme a + 2 AH2. It functions in the pathway porphyrin-containing compound metabolism; heme A biosynthesis; heme A from heme O: step 1/1. Catalyzes the conversion of heme O to heme A by two successive hydroxylations of the methyl group at C8. The first hydroxylation forms heme I, the second hydroxylation results in an unstable dihydroxymethyl group, which spontaneously dehydrates, resulting in the formyl group of heme A. The chain is Heme A synthase from Rickettsia prowazekii (strain Madrid E).